A 299-amino-acid polypeptide reads, in one-letter code: rRNA methyltransferase (299 aa).

Residues Ala-14 to Gly-53 are disordered. Over residues Gly-21–Ala-31 the composition is skewed to low complexity. S-adenosyl-L-methionine is bound by residues Asn-55, Leu-57, Gly-82, Glu-103, Asp-128, and Asn-144.

This sequence belongs to the class I-like SAM-binding methyltransferase superfamily. rRNA adenine N(6)-methyltransferase family.

In terms of biological role, probable RNA methylase. Confers resistance to carbomycin and several other macrolides, lincomycin and vernamycin B, but not to all macrolide-lincosamide-streptogramin B antibiotics. The sequence is that of rRNA methyltransferase (carB) from Streptomyces thermotolerans.